Consider the following 197-residue polypeptide: Translation initiation factor IF-3 (197 aa).

The protein belongs to the IF-3 family. Monomer.

The protein resides in the cytoplasm. Its function is as follows. IF-3 binds to the 30S ribosomal subunit and shifts the equilibrium between 70S ribosomes and their 50S and 30S subunits in favor of the free subunits, thus enhancing the availability of 30S subunits on which protein synthesis initiation begins. In Prosthecochloris aestuarii (strain DSM 271 / SK 413), this protein is Translation initiation factor IF-3.